The sequence spans 355 residues: Isocitrate dehydrogenase [NAD] subunit gamma, mitochondrial (355 aa).

Position 1 (Ile1) is a transit peptide, mitochondrion. Thr82 and Asn95 together coordinate citrate. Residues Arg98, Arg129, and Asp216 each coordinate substrate. Residue Asp216 coordinates Mn(2+). 3 residues coordinate ADP: Asn274, Thr275, and Asn286.

This sequence belongs to the isocitrate and isopropylmalate dehydrogenases family. As to quaternary structure, heterooligomer of subunits alpha (IDH3A), beta (IDH3B), and gamma (IDH3G) in the apparent ratio of 2:1:1. The heterodimer containing one IDH3A and one IDH3B subunit and the heterodimer containing one IDH3A and one IDH3G subunit assemble into a heterotetramer (which contains two subunits of IDH3A, one of IDH3B and one of IDH3G) and further into the heterooctamer. The cofactor is Mg(2+). Mn(2+) serves as cofactor.

It localises to the mitochondrion. With respect to regulation, the heterotetramer and the heterodimer composed of IDH3A and IDH3G subunits can be allosterically activated by citrate (CIT) or/and ADP, and the two activators can act independently or synergistically. The heterodimer composed of IDH3A and IDH3B subunits cannot be allosterically regulated and the allosteric regulation of the heterotetramer is through the IDH3G subunit and not the IDH3B subunit. The IDH3G subunit contains the allosteric site which consists of a CIT-binding site and an ADP-binding site, and the binding of CIT and ADP causes conformational changes at the allosteric site which are transmitted to the active site in the catalytic subunit (IDH3A) through a cascade of conformational changes at the heterodimer interface, leading to stabilization of the isocitrate-binding at the active site and thus activation of the enzyme. ATP can activate the heterotetramer and the heterodimer composed of IDH3A and IDH3G subunits at low concentrations but inhibits their activities at high concentrations, whereas ATP exhibits only inhibitory effect on the heterodimer composed of IDH3A and IDH3B subunits. Its function is as follows. Regulatory subunit which plays a role in the allosteric regulation of the enzyme catalyzing the decarboxylation of isocitrate (ICT) into alpha-ketoglutarate. The heterodimer composed of the alpha (IDH3A) and beta (IDH3B) subunits and the heterodimer composed of the alpha (IDH3A) and gamma (IDH3G) subunits, have considerable basal activity but the full activity of the heterotetramer (containing two subunits of IDH3A, one of IDH3B and one of IDH3G) requires the assembly and cooperative function of both heterodimers. The chain is Isocitrate dehydrogenase [NAD] subunit gamma, mitochondrial (IDH3G) from Macaca fascicularis (Crab-eating macaque).